A 179-amino-acid chain; its full sequence is Sec-independent protein translocase protein TatB (179 aa).

Residues 2 to 22 (FNGVGWGEVVVLLLIGLFVFG) traverse the membrane as a helical segment. Low complexity predominate over residues 98–109 (LLGDDPPAAPSL). The interval 98 to 179 (LLGDDPPAAP…TEVPFDSDAT (82 aa)) is disordered.

The protein belongs to the TatB family. In terms of assembly, the Tat system comprises two distinct complexes: a TatABC complex, containing multiple copies of TatA, TatB and TatC subunits, and a separate TatA complex, containing only TatA subunits. Substrates initially bind to the TatABC complex, which probably triggers association of the separate TatA complex to form the active translocon.

It is found in the cell membrane. Functionally, part of the twin-arginine translocation (Tat) system that transports large folded proteins containing a characteristic twin-arginine motif in their signal peptide across membranes. Together with TatC, TatB is part of a receptor directly interacting with Tat signal peptides. TatB may form an oligomeric binding site that transiently accommodates folded Tat precursor proteins before their translocation. The sequence is that of Sec-independent protein translocase protein TatB from Frankia casuarinae (strain DSM 45818 / CECT 9043 / HFP020203 / CcI3).